Consider the following 351-residue polypeptide: Hydroxymethylglutaryl-CoA synthase (351 aa).

Residue E80 is the Proton donor/acceptor of the active site. The Acyl-thioester intermediate role is filled by C112. (3S)-3-hydroxy-3-methylglutaryl-CoA-binding residues include C112 and S153. R199 provides a ligand contact to CoA. Residues T201 and H234 each coordinate (3S)-3-hydroxy-3-methylglutaryl-CoA. Catalysis depends on H234, which acts as the Proton donor/acceptor. K239 provides a ligand contact to CoA. (3S)-3-hydroxy-3-methylglutaryl-CoA-binding residues include R243, N266, and S296.

It belongs to the thiolase-like superfamily. Archaeal HMG-CoA synthase family. As to quaternary structure, interacts with acetoacetyl-CoA thiolase that catalyzes the precedent step in the pathway and with a DUF35 protein. The acetoacetyl-CoA thiolase/HMG-CoA synthase complex channels the intermediate via a fused CoA-binding site, which allows for efficient coupling of the endergonic thiolase reaction with the exergonic HMGCS reaction.

It catalyses the reaction acetoacetyl-CoA + acetyl-CoA + H2O = (3S)-3-hydroxy-3-methylglutaryl-CoA + CoA + H(+). It functions in the pathway metabolic intermediate biosynthesis; (R)-mevalonate biosynthesis; (R)-mevalonate from acetyl-CoA: step 2/3. Functionally, catalyzes the condensation of acetyl-CoA with acetoacetyl-CoA to form 3-hydroxy-3-methylglutaryl-CoA (HMG-CoA). Functions in the mevalonate (MVA) pathway leading to isopentenyl diphosphate (IPP), a key precursor for the biosynthesis of isoprenoid compounds that are building blocks of archaeal membrane lipids. This Thermoplasma acidophilum (strain ATCC 25905 / DSM 1728 / JCM 9062 / NBRC 15155 / AMRC-C165) protein is Hydroxymethylglutaryl-CoA synthase.